An 83-amino-acid chain; its full sequence is Small ribosomal subunit protein bS16 (83 aa).

This sequence belongs to the bacterial ribosomal protein bS16 family.

The sequence is that of Small ribosomal subunit protein bS16 from Shewanella putrefaciens (strain CN-32 / ATCC BAA-453).